A 595-amino-acid chain; its full sequence is Probable carotenoid cleavage dioxygenase 4, chloroplastic (595 aa).

The N-terminal 34 residues, 1–34 (MDSVSSSSFLSSTFSLHHSLLRRRSSSPTLLRIN), are a transit peptide targeting the chloroplast. A disordered region spans residues 41–74 (RSPITNPSDNNDRRNKPKTLHNRTNHTLVSSPPK). A compositionally biased stretch (basic residues) spans 55-64 (NKPKTLHNRT). The Fe cation site is built by H287, H336, H404, and H583.

It belongs to the carotenoid oxygenase family. As to quaternary structure, interacts with VAR3. Interacts with PGM48. Fe(2+) serves as cofactor. As to expression, mostly expressed in flowers (e.g. sepals and petals), siliques, seeds, leaves and cotyledons.

It is found in the plastid. The protein resides in the chloroplast. The protein localises to the plastoglobule. Functionally, may be involved in carotenoid cleavage. The sequence is that of Probable carotenoid cleavage dioxygenase 4, chloroplastic (CCD4) from Arabidopsis thaliana (Mouse-ear cress).